A 147-amino-acid polypeptide reads, in one-letter code: Large ribosomal subunit protein uL22 (147 aa).

Belongs to the universal ribosomal protein uL22 family. As to quaternary structure, part of the 50S ribosomal subunit.

This protein binds specifically to 23S rRNA; its binding is stimulated by other ribosomal proteins, e.g. L4, L17, and L20. It is important during the early stages of 50S assembly. It makes multiple contacts with different domains of the 23S rRNA in the assembled 50S subunit and ribosome. Its function is as follows. The globular domain of the protein is located near the polypeptide exit tunnel on the outside of the subunit, while an extended beta-hairpin is found that lines the wall of the exit tunnel in the center of the 70S ribosome. The polypeptide is Large ribosomal subunit protein uL22 (Fervidobacterium nodosum (strain ATCC 35602 / DSM 5306 / Rt17-B1)).